Reading from the N-terminus, the 476-residue chain is Glutamate--tRNA ligase (476 aa).

A 'HIGH' region motif is present at residues 9–19 (PSPTGTLHLGT). The 'KMSKS' region motif lies at 248-252 (KLSKR). Lys-251 is a binding site for ATP.

The protein belongs to the class-I aminoacyl-tRNA synthetase family. Glutamate--tRNA ligase type 1 subfamily. In terms of assembly, monomer.

It is found in the cytoplasm. The catalysed reaction is tRNA(Glu) + L-glutamate + ATP = L-glutamyl-tRNA(Glu) + AMP + diphosphate. In terms of biological role, catalyzes the attachment of glutamate to tRNA(Glu) in a two-step reaction: glutamate is first activated by ATP to form Glu-AMP and then transferred to the acceptor end of tRNA(Glu). This is Glutamate--tRNA ligase from Prochlorococcus marinus (strain NATL1A).